Reading from the N-terminus, the 207-residue chain is Large ribosomal subunit protein uL3 (207 aa).

The interval 119 to 143 (GFQGSIKRNGQHRGPMAHGSRYHRR) is disordered.

The protein belongs to the universal ribosomal protein uL3 family. As to quaternary structure, part of the 50S ribosomal subunit. Forms a cluster with proteins L14 and L19.

Functionally, one of the primary rRNA binding proteins, it binds directly near the 3'-end of the 23S rRNA, where it nucleates assembly of the 50S subunit. The protein is Large ribosomal subunit protein uL3 of Ligilactobacillus salivarius (strain UCC118) (Lactobacillus salivarius).